The chain runs to 133 residues: MTLNLRVMAPNRTVWTSEAQEIILSSNSGQIGILPNHAPLLTALDIGVMKVRIDSKWTAVALMGGFAQIENNQMTILVNEAEKASDIDPKEAQEAFDLAETSFNQAVGRKQTIEANLAFKRAKARLEAVNAKY.

It belongs to the ATPase epsilon chain family. F-type ATPases have 2 components, CF(1) - the catalytic core - and CF(0) - the membrane proton channel. CF(1) has five subunits: alpha(3), beta(3), gamma(1), delta(1), epsilon(1). CF(0) has three main subunits: a, b and c.

Its subcellular location is the plastid. The protein localises to the chloroplast thylakoid membrane. Produces ATP from ADP in the presence of a proton gradient across the membrane. This chain is ATP synthase epsilon chain, chloroplastic, found in Zygnema circumcarinatum (Green alga).